A 237-amino-acid chain; its full sequence is Exosome complex component Rrp4 (237 aa).

The region spanning 72–144 is the S1 motif domain; it reads GHIVVGKVVD…LSKDPVLTIK (73 aa). The KH domain maps to 152–211; the sequence is PRGTLVEIPPQKVPRVIGRRGSMVSMIEDLLGVKLIVGQNGRIVVVGDDPQRVEIAVLAV.

The protein belongs to the RRP4 family. Component of the archaeal exosome complex. Forms a trimer of Rrp4 and/or Csl4 subunits. The trimer associates with a hexameric ring-like arrangement composed of 3 Rrp41-Rrp42 heterodimers.

The protein localises to the cytoplasm. Non-catalytic component of the exosome, which is a complex involved in RNA degradation. Increases the RNA binding and the efficiency of RNA degradation. Confers strong poly(A) specificity to the exosome. This Thermofilum pendens (strain DSM 2475 / Hrk 5) protein is Exosome complex component Rrp4.